The sequence spans 573 residues: Sulfite reductase [NADPH] hemoprotein beta-component (573 aa).

[4Fe-4S] cluster-binding residues include C436, C442, C481, and C485. C485 lines the siroheme pocket.

It belongs to the nitrite and sulfite reductase 4Fe-4S domain family. In terms of assembly, alpha(8)-beta(8). The alpha component is a flavoprotein, the beta component is a hemoprotein. Siroheme serves as cofactor. The cofactor is [4Fe-4S] cluster.

It carries out the reaction hydrogen sulfide + 3 NADP(+) + 3 H2O = sulfite + 3 NADPH + 4 H(+). It functions in the pathway sulfur metabolism; hydrogen sulfide biosynthesis; hydrogen sulfide from sulfite (NADPH route): step 1/1. Its function is as follows. Component of the sulfite reductase complex that catalyzes the 6-electron reduction of sulfite to sulfide. This is one of several activities required for the biosynthesis of L-cysteine from sulfate. The protein is Sulfite reductase [NADPH] hemoprotein beta-component of Alteromonas mediterranea (strain DSM 17117 / CIP 110805 / LMG 28347 / Deep ecotype).